The sequence spans 274 residues: Putative hydro-lyase SAV_6940 (274 aa).

This sequence belongs to the D-glutamate cyclase family.

The sequence is that of Putative hydro-lyase SAV_6940 from Streptomyces avermitilis (strain ATCC 31267 / DSM 46492 / JCM 5070 / NBRC 14893 / NCIMB 12804 / NRRL 8165 / MA-4680).